Reading from the N-terminus, the 239-residue chain is Glandular kallikrein, prostatic (239 aa).

Residues 1 to 236 (VIGGQECARD…YREWIERTMA (236 aa)) form the Peptidase S1 domain. Intrachain disulfides connect Cys-7–Cys-151, Cys-26–Cys-42, Cys-128–Cys-197, Cys-162–Cys-176, and Cys-187–Cys-212. His-41 acts as the Charge relay system in catalysis. Asn-78 carries N-linked (GlcNAc...) asparagine glycosylation. Asp-96 (charge relay system) is an active-site residue. N-linked (GlcNAc...) asparagine glycosylation is present at Asn-169. Ser-191 (charge relay system) is an active-site residue.

This sequence belongs to the peptidase S1 family. Kallikrein subfamily.

It catalyses the reaction Preferential cleavage of Arg-|-Xaa bonds in small molecule substrates. Highly selective action to release kallidin (lysyl-bradykinin) from kininogen involves hydrolysis of Met-|-Xaa or Leu-|-Xaa.. Its function is as follows. Glandular kallikreins cleave Met-Lys and Arg-Ser bonds in kininogen to release Lys-bradykinin. The polypeptide is Glandular kallikrein, prostatic (Cavia porcellus (Guinea pig)).